The following is a 466-amino-acid chain: Asparagine--tRNA ligase (466 aa).

This sequence belongs to the class-II aminoacyl-tRNA synthetase family. In terms of assembly, homodimer.

It localises to the cytoplasm. It catalyses the reaction tRNA(Asn) + L-asparagine + ATP = L-asparaginyl-tRNA(Asn) + AMP + diphosphate + H(+). This chain is Asparagine--tRNA ligase, found in Escherichia coli O139:H28 (strain E24377A / ETEC).